The primary structure comprises 177 residues: Large ribosomal subunit protein uL6 (177 aa).

The protein belongs to the universal ribosomal protein uL6 family. Part of the 50S ribosomal subunit.

In terms of biological role, this protein binds to the 23S rRNA, and is important in its secondary structure. It is located near the subunit interface in the base of the L7/L12 stalk, and near the tRNA binding site of the peptidyltransferase center. The protein is Large ribosomal subunit protein uL6 of Aeromonas hydrophila subsp. hydrophila (strain ATCC 7966 / DSM 30187 / BCRC 13018 / CCUG 14551 / JCM 1027 / KCTC 2358 / NCIMB 9240 / NCTC 8049).